The following is a 332-amino-acid chain: Geranylgeranyl diphosphate synthase (332 aa).

Residues Lys-45, Arg-48, and His-77 each coordinate isopentenyl diphosphate. Positions 84 and 88 each coordinate Mg(2+). Position 93 (Arg-93) interacts with an all-trans-polyprenyl diphosphate. An isopentenyl diphosphate-binding site is contributed by Arg-94. An all-trans-polyprenyl diphosphate is bound by residues Lys-177, Thr-178, Gln-215, Lys-232, and Lys-242.

The protein belongs to the FPP/GGPP synthase family. It depends on Mg(2+) as a cofactor.

The catalysed reaction is isopentenyl diphosphate + (2E,6E)-farnesyl diphosphate = (2E,6E,10E)-geranylgeranyl diphosphate + diphosphate. It functions in the pathway isoprenoid biosynthesis; geranylgeranyl diphosphate biosynthesis; geranylgeranyl diphosphate from farnesyl diphosphate and isopentenyl diphosphate: step 1/1. In terms of biological role, catalyzes the condensation of isopentenyl pyrophosphate with the allylic pyrophosphates to yield geranylgeranyl diphosphate (GGPP) which is a precursor of the ether-linked lipids. In Saccharolobus solfataricus (strain ATCC 35092 / DSM 1617 / JCM 11322 / P2) (Sulfolobus solfataricus), this protein is Geranylgeranyl diphosphate synthase (gds).